Here is a 404-residue protein sequence, read N- to C-terminus: MKRTIIMMLDSFGVGASADAASFGDVGSDTFGHIAKACAEGKADIGREGPLKLPNLARLGLGHAAMESTGAFAPGFGDNVELIGAYGHAQELSSGKDTPSGHWEMAGVPVLFEWGYFSEHQNSFPKELTDKILARAGLDGFLGNCHASGTTILEELGEEHMRSGMPIFYTSADSVFQIACHEETFGLDNLYRLCEITREELEPYNIGRVIARPFDGTGPSDFARTGNRKDYSLAPPAKTVLDKLNEAGGEVVSVGKIADIYAYCGITKKVKANGLEALFDATLAEVKSAGDNTIVFTNFVDFDSHYGHRRDVAGYAKGLEYFDARLPEMLALLGEDDLLILTADHGCDPTWQGTDHTREYVPVLAFGAGLKAGSLGRRKSFADIGQSIASHFKLEPMAYGESFL.

Mn(2+)-binding residues include Asp10, Asp303, His308, Asp344, His345, and His356.

This sequence belongs to the phosphopentomutase family. Mn(2+) serves as cofactor.

The protein localises to the cytoplasm. It carries out the reaction 2-deoxy-alpha-D-ribose 1-phosphate = 2-deoxy-D-ribose 5-phosphate. It catalyses the reaction alpha-D-ribose 1-phosphate = D-ribose 5-phosphate. The protein operates within carbohydrate degradation; 2-deoxy-D-ribose 1-phosphate degradation; D-glyceraldehyde 3-phosphate and acetaldehyde from 2-deoxy-alpha-D-ribose 1-phosphate: step 1/2. Functionally, isomerase that catalyzes the conversion of deoxy-ribose 1-phosphate (dRib-1-P) and ribose 1-phosphate (Rib-1-P) to deoxy-ribose 5-phosphate (dRib-5-P) and ribose 5-phosphate (Rib-5-P), respectively. This is Phosphopentomutase from Shewanella baltica (strain OS155 / ATCC BAA-1091).